Reading from the N-terminus, the 784-residue chain is Cyclin-dependent kinase 11B (784 aa).

Over residues 18-60 (QEKKRRKEQEEKAEIKRLKNSDDRDSKRDSLEEGELRDHRMEI) the composition is skewed to basic and acidic residues. A disordered region spans residues 18-401 (QEKKRRKEQE…EGDYVPDSPA (384 aa)). Phosphoserine occurs at positions 47 and 72. The span at 95–113 (EKAHHRKDEKRKEKRRHRS) shows a compositional bias: basic residues. Composition is skewed to basic and acidic residues over residues 114–131 (HSAE…EREH), 138–227 (REEQ…DKGK), and 238–263 (PPRE…RDLL). Serine 115 bears the Phosphoserine mark. Serine 270 is modified (phosphoserine). The span at 278-289 (SAESSSAESGSG) shows a compositional bias: low complexity. Acidic residues-rich tracts occupy residues 290 to 353 (SEEE…EDRE) and 372 to 381 (DSEEGEEEVG). Residues 427–712 (FQCLNRIEEG…AEDGLKHEYF (286 aa)) form the Protein kinase domain. ATP-binding positions include 433-441 (IEEGTYGVV) and lysine 456. Position 471 is a phosphoserine; by CDK7 (serine 471). The residue at position 477 (threonine 477) is a Phosphothreonine; by CDK7. Residue aspartate 551 is the Proton acceptor of the active site. A Phosphoserine modification is found at serine 578. Tyrosine 583 carries the phosphotyrosine modification. A Phosphothreonine modification is found at threonine 584. Lysine 630 participates in a covalent cross-link: Glycyl lysine isopeptide (Lys-Gly) (interchain with G-Cter in SUMO2). The segment at 722-784 (SMFPTWPAKS…AAGPGFSLKF (63 aa)) is disordered. Threonine 740 is subject to Phosphothreonine. Position 741 is a phosphoserine (serine 741).

It belongs to the protein kinase superfamily. CMGC Ser/Thr protein kinase family. CDC2/CDKX subfamily. May interact PAK1 and RANBP9. p110C interacts with RNPS1. Interacts with CCND3. Interacts with CCNL1 and CCNL2. Forms complexes with pre-mRNA-splicing factors, including at least SRSF1, SRSF2 AND SRSF7/SLU7. Requires Mg(2+) as cofactor. Phosphorylation at Ser-115 creates a binding site for 14-3-3 proteins.

It carries out the reaction L-seryl-[protein] + ATP = O-phospho-L-seryl-[protein] + ADP + H(+). The catalysed reaction is L-threonyl-[protein] + ATP = O-phospho-L-threonyl-[protein] + ADP + H(+). Phosphorylation at Thr-437 or Tyr-438 inactivates the enzyme, while phosphorylation at Thr-584 activates it. Its function is as follows. Plays multiple roles in cell cycle progression, cytokinesis and apoptosis. Involved in pre-mRNA splicing in a kinase activity-dependent manner. May act as a negative regulator of normal cell cycle progression. The sequence is that of Cyclin-dependent kinase 11B (Cdk11b) from Mus musculus (Mouse).